The following is a 331-amino-acid chain: Ribosomal RNA small subunit methyltransferase H (331 aa).

Residues 38 to 40 (GGY), D56, F83, D100, and Q107 contribute to the S-adenosyl-L-methionine site. The segment at 287 to 331 (DEAELAENPRARSARLRVGVRTDAPAGKVDPQALGTPLIPKKGRR) is disordered.

It belongs to the methyltransferase superfamily. RsmH family.

The protein resides in the cytoplasm. It carries out the reaction cytidine(1402) in 16S rRNA + S-adenosyl-L-methionine = N(4)-methylcytidine(1402) in 16S rRNA + S-adenosyl-L-homocysteine + H(+). Its function is as follows. Specifically methylates the N4 position of cytidine in position 1402 (C1402) of 16S rRNA. This is Ribosomal RNA small subunit methyltransferase H from Cereibacter sphaeroides (strain ATCC 17023 / DSM 158 / JCM 6121 / CCUG 31486 / LMG 2827 / NBRC 12203 / NCIMB 8253 / ATH 2.4.1.) (Rhodobacter sphaeroides).